The sequence spans 464 residues: DNA primase DnaG (464 aa).

In terms of domain architecture, Toprim spans 171-245 (DTIIIVEGRA…DIDYVARAPK (75 aa)). Glu177, Asp219, and Asp221 together coordinate Mg(2+).

It belongs to the archaeal DnaG primase family. Forms a ternary complex with MCM helicase and DNA. Mg(2+) is required as a cofactor.

The catalysed reaction is ssDNA + n NTP = ssDNA/pppN(pN)n-1 hybrid + (n-1) diphosphate.. Functionally, RNA polymerase that catalyzes the synthesis of short RNA molecules used as primers for DNA polymerase during DNA replication. The chain is DNA primase DnaG from Methanococcus aeolicus (strain ATCC BAA-1280 / DSM 17508 / OCM 812 / Nankai-3).